A 357-amino-acid polypeptide reads, in one-letter code: Fructose-1,6-bisphosphatase class 1 3 (357 aa).

Positions 94, 116, 118, and 119 each coordinate Mg(2+). Substrate contacts are provided by residues 119–122 (DGSS) and asparagine 211. Residue glutamate 283 participates in Mg(2+) binding.

It belongs to the FBPase class 1 family. Homotetramer. The cofactor is Mg(2+).

The protein resides in the cytoplasm. The catalysed reaction is beta-D-fructose 1,6-bisphosphate + H2O = beta-D-fructose 6-phosphate + phosphate. Its pathway is carbohydrate biosynthesis; Calvin cycle. The sequence is that of Fructose-1,6-bisphosphatase class 1 3 from Methylibium petroleiphilum (strain ATCC BAA-1232 / LMG 22953 / PM1).